A 131-amino-acid polypeptide reads, in one-letter code: C-type natriuretic peptide 1 (131 aa).

Residues 1-22 (MLYPALLCAALLLIAPLGHTEG) form the signal peptide. Residues 23–109 (RTLHPSPDAI…KRAVMDRSRR (87 aa)) constitute a propeptide that is removed on maturation. Cysteine 115 and cysteine 131 are oxidised to a cystine.

It belongs to the natriuretic peptide family. Expressed in brain and to a low extent in atrium.

The protein resides in the secreted. Its function is as follows. Exhibits natriuretic and vasodepressant activity. Has a cGMP-stimulating activity. The chain is C-type natriuretic peptide 1 from Oncorhynchus mykiss (Rainbow trout).